A 40-amino-acid polypeptide reads, in one-letter code: U12-ctenitoxin-Co1a (40 aa).

4 disulfides stabilise this stretch: Cys2/Cys16, Cys9/Cys22, Cys15/Cys31, and Cys24/Cys29.

In terms of tissue distribution, expressed by the venom gland.

The protein resides in the secreted. Insecticidal neurotoxin that reversibly inhibits the N-methyl-D-aspartate (NMDA)-subtype of ionotropic glutamate receptor (GRIN) and inhibits inactivation of insect sodium channels (Nav). In vivo, is highly toxic to insects. This is U12-ctenitoxin-Co1a from Ctenus ornatus (Brazilian spider).